Here is a 116-residue protein sequence, read N- to C-terminus: Aspartate 1-decarboxylase (116 aa).

Catalysis depends on Ser25, which acts as the Schiff-base intermediate with substrate; via pyruvic acid. Ser25 carries the pyruvic acid (Ser) modification. Substrate is bound at residue Thr57. Residue Tyr58 is the Proton donor of the active site. 72–74 (GAA) contributes to the substrate binding site.

It belongs to the PanD family. As to quaternary structure, heterooctamer of four alpha and four beta subunits. Requires pyruvate as cofactor. In terms of processing, is synthesized initially as an inactive proenzyme, which is activated by self-cleavage at a specific serine bond to produce a beta-subunit with a hydroxyl group at its C-terminus and an alpha-subunit with a pyruvoyl group at its N-terminus.

It localises to the cytoplasm. The catalysed reaction is L-aspartate + H(+) = beta-alanine + CO2. It functions in the pathway cofactor biosynthesis; (R)-pantothenate biosynthesis; beta-alanine from L-aspartate: step 1/1. Its function is as follows. Catalyzes the pyruvoyl-dependent decarboxylation of aspartate to produce beta-alanine. The sequence is that of Aspartate 1-decarboxylase from Helicobacter pylori (strain HPAG1).